The sequence spans 88 residues: Phosphocarrier protein HPr (88 aa).

The HPr domain maps to 1-88; it reads MEQKSYVIID…DILSKEGLTK (88 aa). The active-site Pros-phosphohistidine intermediate is the His-15. Ser-46 bears the Phosphoserine; by HPrK/P mark.

It belongs to the HPr family.

The protein localises to the cytoplasm. With respect to regulation, phosphorylation on Ser-46 inhibits the phosphoryl transfer from enzyme I to HPr. Functionally, general (non sugar-specific) component of the phosphoenolpyruvate-dependent sugar phosphotransferase system (sugar PTS). This major carbohydrate active-transport system catalyzes the phosphorylation of incoming sugar substrates concomitantly with their translocation across the cell membrane. The phosphoryl group from phosphoenolpyruvate (PEP) is transferred to the phosphoryl carrier protein HPr by enzyme I. Phospho-HPr then transfers it to the PTS EIIA domain. The polypeptide is Phosphocarrier protein HPr (ptsH) (Staphylococcus xylosus).